A 162-amino-acid chain; its full sequence is NADH-quinone oxidoreductase subunit I 2 (162 aa).

4Fe-4S ferredoxin-type domains lie at 53 to 83 and 93 to 122; these read LRRY…IESE and TRYD…ETRI. [4Fe-4S] cluster-binding residues include cysteine 63, cysteine 66, cysteine 69, cysteine 73, cysteine 102, cysteine 105, cysteine 108, and cysteine 112.

Belongs to the complex I 23 kDa subunit family. As to quaternary structure, NDH-1 is composed of 14 different subunits. Subunits NuoA, H, J, K, L, M, N constitute the membrane sector of the complex. [4Fe-4S] cluster serves as cofactor.

Its subcellular location is the cell inner membrane. It carries out the reaction a quinone + NADH + 5 H(+)(in) = a quinol + NAD(+) + 4 H(+)(out). Its function is as follows. NDH-1 shuttles electrons from NADH, via FMN and iron-sulfur (Fe-S) centers, to quinones in the respiratory chain. The immediate electron acceptor for the enzyme in this species is believed to be ubiquinone. Couples the redox reaction to proton translocation (for every two electrons transferred, four hydrogen ions are translocated across the cytoplasmic membrane), and thus conserves the redox energy in a proton gradient. The protein is NADH-quinone oxidoreductase subunit I 2 of Nitrosospira multiformis (strain ATCC 25196 / NCIMB 11849 / C 71).